The following is an 86-amino-acid chain: Large ribosomal subunit protein uL30m (86 aa).

The segment at 67-86 (QQRELRKSNPGFIVEKRTID) is disordered.

It belongs to the universal ribosomal protein uL30 family. In terms of assembly, component of the mitochondrial large ribosomal subunit (mt-LSU). Mature yeast 74S mitochondrial ribosomes consist of a small (37S) and a large (54S) subunit. The 37S small subunit contains a 15S ribosomal RNA (15S mt-rRNA) and 34 different proteins. The 54S large subunit contains a 21S rRNA (21S mt-rRNA) and 46 different proteins.

Its subcellular location is the mitochondrion. In terms of biological role, component of the mitochondrial ribosome (mitoribosome), a dedicated translation machinery responsible for the synthesis of mitochondrial genome-encoded proteins, including at least some of the essential transmembrane subunits of the mitochondrial respiratory chain. The mitoribosomes are attached to the mitochondrial inner membrane and translation products are cotranslationally integrated into the membrane. The protein is Large ribosomal subunit protein uL30m (MRPL33) of Saccharomyces cerevisiae (strain ATCC 204508 / S288c) (Baker's yeast).